The primary structure comprises 219 residues: MKPTPKAVVIFSGGQDSTTCLFLAIKEFGKENVEVVTFQYGQRHAIELDKARWIAQDLGVKQTLIDTSVIKAITTNALMDDQAEIKQTGNTPNTFVDGRNALFLLYTAIYAKSQGIQTIYTGVCETDFSGYPDCRDVFIKSMNVTLNLAMDYNFNIRTPLMYLTKKETWALADQLGAFDYIRTHTHTCYLGVEGGCHTCPSCLLREKGLNEYLEEKGNV.

Position 11–21 (11–21 (FSGGQDSTTCL)) interacts with ATP. Zn(2+) is bound by residues Cys188, Cys196, Cys199, and Cys202.

The protein belongs to the QueC family. Zn(2+) serves as cofactor.

It catalyses the reaction 7-carboxy-7-deazaguanine + NH4(+) + ATP = 7-cyano-7-deazaguanine + ADP + phosphate + H2O + H(+). It participates in purine metabolism; 7-cyano-7-deazaguanine biosynthesis. In terms of biological role, catalyzes the ATP-dependent conversion of 7-carboxy-7-deazaguanine (CDG) to 7-cyano-7-deazaguanine (preQ(0)). In Glaesserella parasuis serovar 5 (strain SH0165) (Haemophilus parasuis), this protein is 7-cyano-7-deazaguanine synthase.